We begin with the raw amino-acid sequence, 113 residues long: U11-theraphotoxin-Hhn1a (113 aa).

Residues 1-21 (MNTVRVTFLLVFVLAVSLGQA) form the signal peptide. Positions 22 to 74 (DKDENRMEMQEKTEQGKSYLDFAENLLLQKLEELEAKLLEEDSEESRNSRQKR) are excised as a propeptide. Residues 61-83 (EEDSEESRNSRQKRCIGEGVPCD) are disordered. 3 disulfides stabilise this stretch: Cys-75–Cys-90, Cys-82–Cys-95, and Cys-89–Cys-110.

The protein belongs to the neurotoxin 14 (magi-1) family. 01 (HNTX-16) subfamily. In terms of tissue distribution, expressed by the venom gland.

It is found in the secreted. Functionally, probable ion channel inhibitor. This is U11-theraphotoxin-Hhn1a from Cyriopagopus hainanus (Chinese bird spider).